The chain runs to 177 residues: Large ribosomal subunit protein uL6 (177 aa).

This sequence belongs to the universal ribosomal protein uL6 family. Part of the 50S ribosomal subunit.

Functionally, this protein binds to the 23S rRNA, and is important in its secondary structure. It is located near the subunit interface in the base of the L7/L12 stalk, and near the tRNA binding site of the peptidyltransferase center. The polypeptide is Large ribosomal subunit protein uL6 (Methylorubrum populi (strain ATCC BAA-705 / NCIMB 13946 / BJ001) (Methylobacterium populi)).